The primary structure comprises 478 residues: Pyrrolysine--tRNA ligase (478 aa).

The disordered stretch occupies residues 106 to 188; that stretch reads VMPKSVARTP…TSAMPASTSA (83 aa). The span at 122 to 132 shows a compositional bias: polar residues; the sequence is APVQTLPSESQ. Low complexity predominate over residues 133–188; the sequence is PAPTTPISASTTAPASTSTTAPAPASTTAPAPASTTAPASASTTISTSAMPASTSA.

It belongs to the class-II aminoacyl-tRNA synthetase family.

The protein localises to the cytoplasm. It carries out the reaction tRNA(Pyl) + L-pyrrolysine + ATP = L-pyrrolysyl-tRNA(Pyl) + AMP + diphosphate. Functionally, catalyzes the attachment of pyrrolysine to tRNA(Pyl). Pyrrolysine is a lysine derivative encoded by the termination codon UAG. This Methanosarcina thermophila protein is Pyrrolysine--tRNA ligase.